Here is a 612-residue protein sequence, read N- to C-terminus: Zinc metalloproteinase nas-36 (612 aa).

The first 16 residues, 1-16, serve as a signal peptide directing secretion; sequence MLLLVLLFVFISATNA. An N-linked (GlcNAc...) asparagine glycan is attached at asparagine 15. A propeptide spanning residues 17-122 is cleaved from the precursor; it reads SDVGRRELEK…KSKPNVRGRR (106 aa). The 198-residue stretch at 123-320 folds into the Peptidase M12A domain; it reads SFDASPESKW…IETINKAYCS (198 aa). Residue asparagine 163 is glycosylated (N-linked (GlcNAc...) asparagine). 8 disulfide bridges follow: cysteine 166–cysteine 319, cysteine 190–cysteine 209, cysteine 329–cysteine 343, cysteine 345–cysteine 354, cysteine 365–cysteine 394, cysteine 515–cysteine 546, cysteine 519–cysteine 551, and cysteine 531–cysteine 536. Residue histidine 217 participates in Zn(2+) binding. Glutamate 218 is an active-site residue. Residues histidine 221 and histidine 227 each coordinate Zn(2+). The EGF-like domain occupies 320-355; sequence SDRCSGSNDCKNGGYPHPKQCDTCLCPNGLSGPKCE. The region spanning 365–478 is the CUB domain; sequence CGGKIVVKEE…VGFKLQARAT (114 aa). The TSP type-1 domain maps to 503–552; it reads TDQWAEWGSWSQCSRSCGGCGIMSRVRVCRTKQCKGRRQEFSTCNLKACP.

The cofactor is Zn(2+).

The protein localises to the secreted. With respect to regulation, inhibited by 1,10-phenanthroline. Functionally, metalloprotease. Involved in molting, a process during larval stages in which a new cuticle is formed and the old cuticle is shed. This chain is Zinc metalloproteinase nas-36, found in Haemonchus contortus (Barber pole worm).